Reading from the N-terminus, the 228-residue chain is Sec-independent protein translocase protein TatB (228 aa).

Residues 1–21 (MFDFGLGELIFVGIIALIVLG) traverse the membrane as a helical segment. Disordered stretches follow at residues 106–164 (TPAD…TDKD) and 196–228 (VPHT…VRKS). Positions 135–151 (PSERSDTSAETLGDDRQ) are enriched in basic and acidic residues. The segment covering 206–228 (AINRKRDFRPKHRAKPKLRVRKS) has biased composition (basic residues).

It belongs to the TatB family. As to quaternary structure, the Tat system comprises two distinct complexes: a TatABC complex, containing multiple copies of TatA, TatB and TatC subunits, and a separate TatA complex, containing only TatA subunits. Substrates initially bind to the TatABC complex, which probably triggers association of the separate TatA complex to form the active translocon.

It localises to the cell inner membrane. Part of the twin-arginine translocation (Tat) system that transports large folded proteins containing a characteristic twin-arginine motif in their signal peptide across membranes. Together with TatC, TatB is part of a receptor directly interacting with Tat signal peptides. TatB may form an oligomeric binding site that transiently accommodates folded Tat precursor proteins before their translocation. The sequence is that of Sec-independent protein translocase protein TatB from Neisseria gonorrhoeae (strain ATCC 700825 / FA 1090).